The chain runs to 507 residues: Glucose transporter type 3 (507 aa).

Residues 1–26 form a disordered region; that stretch reads MRKGGIQDAEPVEPPQSSRKSGTWFA. The Cytoplasmic portion of the chain corresponds to 1–53; it reads MRKGGIQDAEPVEPPQSSRKSGTWFAKRPSEMPERHVERAPVRQKINNVGLYK. Residues 54 to 74 traverse the membrane as a helical segment; the sequence is ATLYSNIGSFFFGIAVGWSGT. Topologically, residues 75-95 are extracellular; that stretch reads AERSVMEQHSYSFQPTELQWS. The chain crosses the membrane as a helical span at residues 96 to 116; the sequence is GVCILLTLGAALWCLPMGLMV. The Cytoplasmic portion of the chain corresponds to 117 to 124; the sequence is RLLGCRRT. The chain crosses the membrane as a helical span at residues 125–145; the sequence is ILIQLLPNFLGWFLTVFARSV. The Extracellular portion of the chain corresponds to 146–152; it reads PMLYAGR. The chain crosses the membrane as a helical span at residues 153-173; sequence FFLGMCGGAHCVVVPIYNAEI. Residues 174–183 lie on the Cytoplasmic side of the membrane; the sequence is STTKKRGAMG. Residues 184–204 traverse the membrane as a helical segment; sequence VVFEGACICGVIYSFAMSLFL. Topologically, residues 205–207 are extracellular; it reads ELR. Residues 208–228 traverse the membrane as a helical segment; that stretch reads IINFVNLGLLALGPLQILMPE. Residues 229–293 lie on the Cytoplasmic side of the membrane; sequence SPAYYVDHGN…YKKVRRSLAR (65 aa). A helical membrane pass occupies residues 294-314; that stretch reads SLAIALLQKLCGALIFIFYGL. At 315–324 the chain is on the extracellular side; the sequence is NMLDCLRIRR. A helical membrane pass occupies residues 325–345; it reads EFGLILCLGLILGFLACFFLV. Over 346–351 the chain is Cytoplasmic; that stretch reads DRLGRR. A helical transmembrane segment spans residues 352–372; sequence PLLIFSSAGIVFVSIYLGLHF. Topologically, residues 373-374 are extracellular; it reads KV. The helical transmembrane segment at 375 to 395 threads the bilayer; that stretch reads WMTMGLTVMSWIALFCIAIFV. Over 396–420 the chain is Cytoplasmic; sequence GCYTAGVGSLTWVLNAELLVRPMRP. The helical transmembrane segment at 421-441 threads the bilayer; sequence LGCSIVCAFNWLTAFFVICWF. The Extracellular portion of the chain corresponds to 442 to 450; that stretch reads GSHGVKCQP. Residues 451 to 471 form a helical membrane-spanning segment; that stretch reads YLFLLFAIIASLILLFSLIYI. Over 472–507 the chain is Cytoplasmic; the sequence is PETKKLSSAKIQQRLGGLINRPAVITFTSSSDSSNA.

The protein belongs to the major facilitator superfamily. Sugar transporter (TC 2.A.1.1) family. Glucose transporter subfamily.

The protein localises to the cell membrane. Its subcellular location is the perikaryon. It localises to the cell projection. Facilitative glucose transporter that can also mediate the uptake of various other monosaccharides across the cell membrane. The polypeptide is Glucose transporter type 3 (Glut3) (Drosophila melanogaster (Fruit fly)).